The sequence spans 436 residues: 3-phosphoshikimate 1-carboxyvinyltransferase (436 aa).

3 residues coordinate 3-phosphoshikimate: Lys22, Ser23, and Arg27. Phosphoenolpyruvate is bound at residue Lys22. Phosphoenolpyruvate is bound by residues Gly95 and Arg123. 3-phosphoshikimate is bound by residues Ser170, Ser171, Gln172, Ser201, Asp322, and Lys349. Residue Gln172 participates in phosphoenolpyruvate binding. Asp322 serves as the catalytic Proton acceptor. Phosphoenolpyruvate-binding residues include Arg353, Arg397, and Lys422.

The protein belongs to the EPSP synthase family. Monomer.

The protein resides in the cytoplasm. It carries out the reaction 3-phosphoshikimate + phosphoenolpyruvate = 5-O-(1-carboxyvinyl)-3-phosphoshikimate + phosphate. The protein operates within metabolic intermediate biosynthesis; chorismate biosynthesis; chorismate from D-erythrose 4-phosphate and phosphoenolpyruvate: step 6/7. Catalyzes the transfer of the enolpyruvyl moiety of phosphoenolpyruvate (PEP) to the 5-hydroxyl of shikimate-3-phosphate (S3P) to produce enolpyruvyl shikimate-3-phosphate and inorganic phosphate. This chain is 3-phosphoshikimate 1-carboxyvinyltransferase, found in Ralstonia nicotianae (strain ATCC BAA-1114 / GMI1000) (Ralstonia solanacearum).